The following is a 513-amino-acid chain: ATP synthase subunit alpha (513 aa).

ATP is bound at residue 170–177; the sequence is GDRQTGKT.

Belongs to the ATPase alpha/beta chains family. In terms of assembly, F-type ATPases have 2 components, CF(1) - the catalytic core - and CF(0) - the membrane proton channel. CF(1) has five subunits: alpha(3), beta(3), gamma(1), delta(1), epsilon(1). CF(0) has four main subunits: a(1), b(1), b'(1) and c(9-12).

It localises to the cell inner membrane. It catalyses the reaction ATP + H2O + 4 H(+)(in) = ADP + phosphate + 5 H(+)(out). Produces ATP from ADP in the presence of a proton gradient across the membrane. The alpha chain is a regulatory subunit. The protein is ATP synthase subunit alpha of Gloeobacter violaceus (strain ATCC 29082 / PCC 7421).